A 446-amino-acid chain; its full sequence is Elongation factor 1-alpha (446 aa).

The tr-type G domain occupies K5–K230. Positions G14–S21 are G1. A GTP-binding site is contributed by G14–S21. A G2 region spans residues G70–D74. The interval D91 to G94 is G3. GTP is bound by residues D91–H95 and N153–D156. The segment at N153–D156 is G4. Residues S194–W196 form a G5 region.

It belongs to the TRAFAC class translation factor GTPase superfamily. Classic translation factor GTPase family. EF-Tu/EF-1A subfamily.

Its subcellular location is the cytoplasm. In terms of biological role, this protein promotes the GTP-dependent binding of aminoacyl-tRNA to the A-site of ribosomes during protein biosynthesis. The sequence is that of Elongation factor 1-alpha (EFAA) from Stylonychia lemnae (Ciliate).